The sequence spans 279 residues: Probable endonuclease 4 (279 aa).

The Zn(2+) site is built by histidine 66, histidine 106, glutamate 142, aspartate 176, histidine 179, histidine 213, aspartate 226, histidine 228, and glutamate 258.

This sequence belongs to the AP endonuclease 2 family. The cofactor is Zn(2+).

It catalyses the reaction Endonucleolytic cleavage to 5'-phosphooligonucleotide end-products.. Endonuclease IV plays a role in DNA repair. It cleaves phosphodiester bonds at apurinic or apyrimidinic (AP) sites, generating a 3'-hydroxyl group and a 5'-terminal sugar phosphate. This chain is Probable endonuclease 4, found in Photobacterium profundum (strain SS9).